The primary structure comprises 583 residues: Chitinase 2 (583 aa).

Residues Met1–Ala19 form the signal peptide. A GH18 domain is found at Asn23–Asn305. Glu153 serves as the catalytic Proton donor. Asn370, Asn546, and Asn549 each carry an N-linked (GlcNAc...) asparagine glycan. A lipid anchor (GPI-anchor amidated glycine) is attached at Gly560. A propeptide spans Ala561 to Phe583 (removed in mature form).

It belongs to the glycosyl hydrolase 18 family. Chitinase class III subfamily. Post-translationally, the GPI-anchor is attached to the protein in the endoplasmic reticulum and serves to target the protein to the cell surface. There, the glucosamine-inositol phospholipid moiety is cleaved off and the GPI-modified mannoprotein is covalently attached via its lipidless GPI glycan remnant to the 1,6-beta-glucan of the outer cell wall layer. In terms of processing, proteolytic cleavage by SAP9 and SAP10 leads to the cell wall release of CHT2 and increased chitinase activity, suggesting a direct influence of SAP9 and SAP10 on CHT2 function.

The protein localises to the secreted. It localises to the cell wall. The protein resides in the membrane. It catalyses the reaction Random endo-hydrolysis of N-acetyl-beta-D-glucosaminide (1-&gt;4)-beta-linkages in chitin and chitodextrins.. Its function is as follows. Chitinase involved in the remodeling of chitin in the fungal cell wall. Plays a role in cell separation. The chain is Chitinase 2 (CHT2) from Candida albicans (strain SC5314 / ATCC MYA-2876) (Yeast).